A 394-amino-acid polypeptide reads, in one-letter code: Elongation factor Tu (394 aa).

Residues 10–204 (KPHVNIGTIG…AVDEYIPTPD (195 aa)) form the tr-type G domain. The interval 19 to 26 (GHIDHGKT) is G1. Position 19-26 (19-26 (GHIDHGKT)) interacts with GTP. T26 serves as a coordination point for Mg(2+). A G2 region spans residues 60–64 (GITIN). Positions 81 to 84 (DCPG) are G3. GTP-binding positions include 81–85 (DCPGH) and 136–139 (NKCD). Residues 136–139 (NKCD) are G4. A G5 region spans residues 174 to 176 (SAL).

This sequence belongs to the TRAFAC class translation factor GTPase superfamily. Classic translation factor GTPase family. EF-Tu/EF-1A subfamily. Monomer.

It is found in the cytoplasm. The enzyme catalyses GTP + H2O = GDP + phosphate + H(+). GTP hydrolase that promotes the GTP-dependent binding of aminoacyl-tRNA to the A-site of ribosomes during protein biosynthesis. This Mycoplasmoides gallisepticum (strain R(low / passage 15 / clone 2)) (Mycoplasma gallisepticum) protein is Elongation factor Tu.